Here is a 577-residue protein sequence, read N- to C-terminus: Arginine--tRNA ligase (577 aa).

Positions 132 to 142 (ANPTGPLHVGH) match the 'HIGH' region motif.

Belongs to the class-I aminoacyl-tRNA synthetase family. In terms of assembly, monomer.

The protein resides in the cytoplasm. It carries out the reaction tRNA(Arg) + L-arginine + ATP = L-arginyl-tRNA(Arg) + AMP + diphosphate. The polypeptide is Arginine--tRNA ligase (Janthinobacterium sp. (strain Marseille) (Minibacterium massiliensis)).